The primary structure comprises 245 residues: MICAFLRVVRHAEKLHGSLGRQLLLPHFVLTKACLKTQPLRWGLREQKKTVQPRTVLGFTQKTFWTQGPDPRKAKEDSSKQVSINRNQREETGVSTSQKVKEAGRDVTYLIVVLFGVSITGSLLYTIFKELFSSSSPNIIYGKALGKCRTHPEVISVFGEPVKGYGEMSRRGRRQHVSFTEYANNGLKRIRVKFYIEGSEPGKQGTVHAEVEENPRSGQFDFRYIFVDVAPKRSIVVEDNRFQQS.

The N-terminal 18 residues, 1–18 (MICAFLRVVRHAEKLHGS), are a transit peptide targeting the mitochondrion. The tract at residues 64 to 97 (FWTQGPDPRKAKEDSSKQVSINRNQREETGVSTS) is disordered. Residues 70-79 (DPRKAKEDSS) show a composition bias toward basic and acidic residues. A helical membrane pass occupies residues 108-128 (TYLIVVLFGVSITGSLLYTIF).

Belongs to the TIM21 family. As to quaternary structure, component of the TIM23 complex. Component of the MITRAC (mitochondrial translation regulation assembly intermediate of cytochrome c oxidase complex) complex, the core components of this complex being COA3/MITRAC12 and COX14. Interacts with COA3 and MT-CO1/COX1.

It localises to the mitochondrion membrane. In terms of biological role, participates in the translocation of transit peptide-containing proteins across the mitochondrial inner membrane. Also required for assembly of mitochondrial respiratory chain complex I and complex IV as component of the MITRAC (mitochondrial translation regulation assembly intermediate of cytochrome c oxidase complex) complex. Probably shuttles between the presequence translocase and respiratory-chain assembly intermediates in a process that promotes incorporation of early nuclear-encoded subunits into these complexes. The protein is Mitochondrial import inner membrane translocase subunit Tim21 (Timm21) of Rattus norvegicus (Rat).